The primary structure comprises 295 residues: MEKKVGTDRVKRGMAQMQKGGVIMDVVNAEQAKIAEDAGAVAVMALERVPSDIRAAGGVARMADPRIVEEVMNAVSIPVMAKARIGHITEARVLEAMGVDYIDESEVLTPADDEFHLLKSDFTVPFVCGCRDIGEALRRIGEGAAMLRTKGEPGTGNIVEAVRHMRQVNGQIRQIVGMTDDELMVAAKNFGAPYELVKEIKSLGKLPVVNFAAGGVATPSDAALMMELGADGVFVGSGIFKSDNPAKFASAIVQATTYYTDYELIGKLSKELGSPMKGIEMSRLNPEDRMQDRSV.

A D-ribose 5-phosphate-binding site is contributed by Asp-25. Lys-82 acts as the Schiff-base intermediate with D-ribose 5-phosphate in catalysis. D-ribose 5-phosphate is bound at residue Gly-154. Arg-166 lines the D-glyceraldehyde 3-phosphate pocket. Residues Gly-215 and 236–237 contribute to the D-ribose 5-phosphate site; that span reads GS.

Belongs to the PdxS/SNZ family. In terms of assembly, in the presence of PdxT, forms a dodecamer of heterodimers.

It carries out the reaction aldehydo-D-ribose 5-phosphate + D-glyceraldehyde 3-phosphate + L-glutamine = pyridoxal 5'-phosphate + L-glutamate + phosphate + 3 H2O + H(+). It functions in the pathway cofactor biosynthesis; pyridoxal 5'-phosphate biosynthesis. Its function is as follows. Catalyzes the formation of pyridoxal 5'-phosphate from ribose 5-phosphate (RBP), glyceraldehyde 3-phosphate (G3P) and ammonia. The ammonia is provided by the PdxT subunit. Can also use ribulose 5-phosphate and dihydroxyacetone phosphate as substrates, resulting from enzyme-catalyzed isomerization of RBP and G3P, respectively. In Listeria welshimeri serovar 6b (strain ATCC 35897 / DSM 20650 / CCUG 15529 / CIP 8149 / NCTC 11857 / SLCC 5334 / V8), this protein is Pyridoxal 5'-phosphate synthase subunit PdxS.